Consider the following 509-residue polypeptide: MASTAHRQPSRPTTRQRQRTGRACEECRRRKLRCDGQQPRCGVCVDSGVTCEVNSQRRPRGPKKGYLTALRNRVAMLETRLPAQHLVGPLSEFNPLSTPLTNDHHDGCSVSSASSRSDSNPPPTVSEPDMSLPNTTTSVSSAPSFATCSKDIGGAEPITELVQAELNQLYFDRVHPSIQILHQRRYLGWARNAAKKTSRRCLQYAVWTLASLLSAQFQHLQDSFYQETKRTLEFSYLSGDSNAPVDTEEIQAWILIATYESMRTFHRSAWMSAGRAFRLVQLMRLHEIDSPTKPPVPEADLVETEEKRRVFWMAYFLDHLLSMRNNWPITLNEHVICTRLPAPDMEFQSGQPVLGAFLSEAIMDVMPQTTSPFNECVILATICGRSLFHAQQYSVRFVYGELAPNWTDQHQWLDNVLTNRLQILSQYYPSPTQICDPMLSFAHIMGQASVIHLYKGMASVVWAVDDGAWVVEYQRRALSAAQEIVKLAKGLTEFNFFKVCHTASLPCND.

The disordered stretch occupies residues 1 to 22; that stretch reads MASTAHRQPSRPTTRQRQRTGR. Positions 24-51 form a DNA-binding region, zn(2)-C6 fungal-type; the sequence is CEECRRRKLRCDGQQPRCGVCVDSGVTC. The segment at 97–143 is disordered; that stretch reads STPLTNDHHDGCSVSSASSRSDSNPPPTVSEPDMSLPNTTTSVSSAP. A compositionally biased stretch (low complexity) spans 109 to 119; that stretch reads SVSSASSRSDS. Over residues 132-143 the composition is skewed to polar residues; it reads LPNTTTSVSSAP.

It localises to the nucleus. Its function is as follows. Transcription factor that regulates the expression of the gene cluster that mediates the biosynthesis of the mycotoxin citrinin, a hepato-nephrotoxic compound to humans due to inhibition of respiration complex III. This Monascus ruber (Mold) protein is Citrinin biosynthesis transcriptional activator mrl3.